The sequence spans 612 residues: Methionine--tRNA ligase (612 aa).

A 'HIGH' region motif is present at residues 12-22 (PYANGPRHIGH). Zn(2+) contacts are provided by Cys-144, Cys-147, Cys-157, and Cys-160. The 'KMSKS' region signature appears at 348–352 (KFSSS). Residue Ser-351 coordinates ATP.

Belongs to the class-I aminoacyl-tRNA synthetase family. MetG type 1 subfamily. Monomer. The cofactor is Zn(2+).

The protein resides in the cytoplasm. It carries out the reaction tRNA(Met) + L-methionine + ATP = L-methionyl-tRNA(Met) + AMP + diphosphate. Is required not only for elongation of protein synthesis but also for the initiation of all mRNA translation through initiator tRNA(fMet) aminoacylation. The chain is Methionine--tRNA ligase from Corynebacterium kroppenstedtii (strain DSM 44385 / JCM 11950 / CIP 105744 / CCUG 35717).